The primary structure comprises 452 residues: Pup--protein ligase (452 aa).

E9 provides a ligand contact to Mg(2+). R53 serves as a coordination point for ATP. Y55 contacts Mg(2+). D57 serves as the catalytic Proton acceptor. Residue E63 participates in Mg(2+) binding. The ATP site is built by T66 and W419.

Belongs to the Pup ligase/Pup deamidase family. Pup-conjugating enzyme subfamily.

The enzyme catalyses ATP + [prokaryotic ubiquitin-like protein]-L-glutamate + [protein]-L-lysine = ADP + phosphate + N(6)-([prokaryotic ubiquitin-like protein]-gamma-L-glutamyl)-[protein]-L-lysine.. It participates in protein degradation; proteasomal Pup-dependent pathway. The protein operates within protein modification; protein pupylation. Its function is as follows. Catalyzes the covalent attachment of the prokaryotic ubiquitin-like protein modifier Pup to the proteasomal substrate proteins, thereby targeting them for proteasomal degradation. This tagging system is termed pupylation. The ligation reaction involves the side-chain carboxylate of the C-terminal glutamate of Pup and the side-chain amino group of a substrate lysine. This chain is Pup--protein ligase, found in Gordonia bronchialis (strain ATCC 25592 / DSM 43247 / BCRC 13721 / JCM 3198 / KCTC 3076 / NBRC 16047 / NCTC 10667) (Rhodococcus bronchialis).